Consider the following 629-residue polypeptide: MMTGTTLILEPVMDSKDELVKQHAKVAEDAVAGWEKAENEVVELKQKLEDAADKNIVLEDRVSHLDGALKECVRQLRQFRDEQEKNIQAAVTESTKELHSANTGLEKRVLELQKEAEAAKSENMMLRREFLTQREDLEIVMIERDLSTQAAETASKQHLDIIKKLAKLEAECRKLRILAKTSSSLSSNQSVDSHSDGGRERVEGSCSDSWASSAFISELDQIKNEKGGNRSLQGTTSSTEIDLMDDFLEMERLVALPTETQAKNSKDGYELSLMEKLEKIQAEKDDLEREVKCCREAEKRLSLEIEAVVGDKMELEDMLKRVEAEKAELKTSFDVLKDKYQESRVCFQEVDTKLEKLQAEKDELDSEVICCKEAEKRFSLELEAVVGDKIEMEDELEKMEAEKAELKISFDVIKDQYQESRVCFQEVEMKLEAMKRELKLANESKTQAESRVTRMEAEVRKERIVSDGLKEKCETFEEELRREIEEKTMIKREKVEPKIKQEDIATAAGKFADCQKTIASLGKQLQSLATLEEFLIDTASIPGSARSVHNKEALLGKDPHECIKTINGRSLEFLAIQNSNNKTSPPCSSSSDSTTVSLIMSSNRGSSEKNRNGFATVFTRSRNSVNLGI.

Coiled-coil stretches lie at residues 34-61 and 102-171; these read WEKAENEVVELKQKLEDAADKNIVLEDR and NTGL…LEAE. The tract at residues 186–205 is disordered; that stretch reads SSNQSVDSHSDGGRERVEGS. Positions 193–203 are enriched in basic and acidic residues; that stretch reads SHSDGGRERVE. The stretch at 270 to 493 forms a coiled coil; the sequence is ELSLMEKLEK…IEEKTMIKRE (224 aa).

It belongs to the FPP family. As to quaternary structure, interacts with WPP/MAF proteins. Binds to COG2; this interaction promotes the association between cortical microtubules and EXO70A1. Accumulates in preferentially xylem cells.

It localises to the vesicle. Functionally, ensures, when in complex with FPP3/VETH1 and COG2, the correct secondary cell wall (SCW) deposition pattern by recruiting exocyst components to cortical microtubules in xylem cells during secondary cell wall deposition by recruiting EXO70A1. This chain is Filament-like plant protein 2, found in Arabidopsis thaliana (Mouse-ear cress).